The primary structure comprises 186 residues: UPF0301 protein Saro_0683 (186 aa).

This sequence belongs to the UPF0301 (AlgH) family.

The chain is UPF0301 protein Saro_0683 from Novosphingobium aromaticivorans (strain ATCC 700278 / DSM 12444 / CCUG 56034 / CIP 105152 / NBRC 16084 / F199).